The following is a 212-amino-acid chain: Proteasome subunit beta type-2 (212 aa).

It belongs to the peptidase T1B family. The 26S proteasome consists of a 20S proteasome core and two 19S regulatory subunits. The 20S proteasome core is composed of 28 subunits that are arranged in four stacked rings, resulting in a barrel-shaped structure. The two end rings are each formed by seven alpha subunits, and the two central rings are each formed by seven beta subunits. The catalytic chamber with the active sites is on the inside of the barrel.

The protein localises to the cytoplasm. Its subcellular location is the nucleus. Its function is as follows. Non-catalytic component of the proteasome, a multicatalytic proteinase complex which is characterized by its ability to cleave peptides with Arg, Phe, Tyr, Leu, and Glu adjacent to the leaving group at neutral or slightly basic pH. The proteasome has an ATP-dependent proteolytic activity. This Oryza sativa subsp. japonica (Rice) protein is Proteasome subunit beta type-2 (PBD1).